Consider the following 396-residue polypeptide: Elongation factor Tu (396 aa).

Residues 10-206 (KPHVNVGTIG…ALDTYIPTPE (197 aa)) form the tr-type G domain. The tract at residues 19-26 (GHVDHGKT) is G1. 19 to 26 (GHVDHGKT) provides a ligand contact to GTP. T26 is a Mg(2+) binding site. Residues 60–64 (GITIN) are G2. Positions 81–84 (DCPG) are G3. Residues 81–85 (DCPGH) and 136–139 (NKCD) contribute to the GTP site. The segment at 136–139 (NKCD) is G4. Positions 174-176 (SAK) are G5.

It belongs to the TRAFAC class translation factor GTPase superfamily. Classic translation factor GTPase family. EF-Tu/EF-1A subfamily. In terms of assembly, monomer.

Its subcellular location is the cytoplasm. It catalyses the reaction GTP + H2O = GDP + phosphate + H(+). Its function is as follows. GTP hydrolase that promotes the GTP-dependent binding of aminoacyl-tRNA to the A-site of ribosomes during protein biosynthesis. The sequence is that of Elongation factor Tu from Cupriavidus pinatubonensis (strain JMP 134 / LMG 1197) (Cupriavidus necator (strain JMP 134)).